A 447-amino-acid chain; its full sequence is Gamma-glutamyl phosphate reductase (447 aa).

It belongs to the gamma-glutamyl phosphate reductase family.

It is found in the cytoplasm. It catalyses the reaction L-glutamate 5-semialdehyde + phosphate + NADP(+) = L-glutamyl 5-phosphate + NADPH + H(+). It functions in the pathway amino-acid biosynthesis; L-proline biosynthesis; L-glutamate 5-semialdehyde from L-glutamate: step 2/2. Functionally, catalyzes the NADPH-dependent reduction of L-glutamate 5-phosphate into L-glutamate 5-semialdehyde and phosphate. The product spontaneously undergoes cyclization to form 1-pyrroline-5-carboxylate. The chain is Gamma-glutamyl phosphate reductase from Methanosarcina mazei (strain ATCC BAA-159 / DSM 3647 / Goe1 / Go1 / JCM 11833 / OCM 88) (Methanosarcina frisia).